Here is a 240-residue protein sequence, read N- to C-terminus: Cysteine-rich venom protein (240 aa).

The signal sequence occupies residues 1 to 19 (MIAFIVLPILAAVLQQSSG). The region spanning 39–166 (DLHNSLRRSV…EYSYFYVCQY (128 aa)) is the SCP domain. Disulfide bonds link Cys-75–Cys-153, Cys-92–Cys-167, Cys-148–Cys-164, Cys-186–Cys-193, Cys-189–Cys-198, Cys-202–Cys-235, Cys-211–Cys-229, and Cys-220–Cys-233. Positions 202-235 (CRQENKFTNCDSLVRQSSCQDNYMKTNCPASCFC) constitute a ShKT domain.

It belongs to the CRISP family. As to expression, expressed by the venom gland.

The protein resides in the secreted. Blocks contraction of smooth muscle elicited by high potassium-induced depolarization, but does not block caffeine-stimulated contraction. May target voltage-gated calcium channels on smooth muscle. This Protobothrops jerdonii (Jerdon's pitviper) protein is Cysteine-rich venom protein.